The following is a 106-amino-acid chain: Large ribosomal subunit protein uL23 (106 aa).

This sequence belongs to the universal ribosomal protein uL23 family. In terms of assembly, part of the 50S ribosomal subunit. Contacts protein L29, and trigger factor when it is bound to the ribosome.

In terms of biological role, one of the early assembly proteins it binds 23S rRNA. One of the proteins that surrounds the polypeptide exit tunnel on the outside of the ribosome. Forms the main docking site for trigger factor binding to the ribosome. The polypeptide is Large ribosomal subunit protein uL23 (Neisseria gonorrhoeae (strain ATCC 700825 / FA 1090)).